Here is a 263-residue protein sequence, read N- to C-terminus: Endonuclease 8 (263 aa).

Proline 2 functions as the Schiff-base intermediate with DNA in the catalytic mechanism. Glutamate 3 (proton donor) is an active-site residue. Lysine 53 functions as the Proton donor; for beta-elimination activity in the catalytic mechanism. Glutamine 70, arginine 125, and asparagine 169 together coordinate DNA. Residues 229–263 form an FPG-type zinc finger; that stretch reads KVFHRDGELCERCGGIIEKTTLSSRPFYWCPGCQH. Residue arginine 253 is the Proton donor; for delta-elimination activity of the active site.

It belongs to the FPG family. It depends on Zn(2+) as a cofactor.

The catalysed reaction is 2'-deoxyribonucleotide-(2'-deoxyribose 5'-phosphate)-2'-deoxyribonucleotide-DNA = a 3'-end 2'-deoxyribonucleotide-(2,3-dehydro-2,3-deoxyribose 5'-phosphate)-DNA + a 5'-end 5'-phospho-2'-deoxyribonucleoside-DNA + H(+). Functionally, involved in base excision repair of DNA damaged by oxidation or by mutagenic agents. Acts as a DNA glycosylase that recognizes and removes damaged bases. Has a preference for oxidized pyrimidines, such as thymine glycol, 5,6-dihydrouracil and 5,6-dihydrothymine. Has AP (apurinic/apyrimidinic) lyase activity and introduces nicks in the DNA strand. Cleaves the DNA backbone by beta-delta elimination to generate a single-strand break at the site of the removed base with both 3'- and 5'-phosphates. This is Endonuclease 8 from Shigella dysenteriae serotype 1 (strain Sd197).